The following is a 327-amino-acid chain: Ribose-phosphate pyrophosphokinase (327 aa).

Residues Asn46 to Glu48 and Arg105 to Gln106 contribute to the ATP site. Mg(2+) contacts are provided by His139 and Asp179. The active site involves Lys203. Residues Arg205, Asp231, and Asp235–Thr239 each bind D-ribose 5-phosphate.

It belongs to the ribose-phosphate pyrophosphokinase family. Class I subfamily. As to quaternary structure, homohexamer. Requires Mg(2+) as cofactor.

It localises to the cytoplasm. It catalyses the reaction D-ribose 5-phosphate + ATP = 5-phospho-alpha-D-ribose 1-diphosphate + AMP + H(+). The protein operates within metabolic intermediate biosynthesis; 5-phospho-alpha-D-ribose 1-diphosphate biosynthesis; 5-phospho-alpha-D-ribose 1-diphosphate from D-ribose 5-phosphate (route I): step 1/1. Functionally, involved in the biosynthesis of the central metabolite phospho-alpha-D-ribosyl-1-pyrophosphate (PRPP) via the transfer of pyrophosphoryl group from ATP to 1-hydroxyl of ribose-5-phosphate (Rib-5-P). The protein is Ribose-phosphate pyrophosphokinase of Mycobacterium leprae (strain TN).